We begin with the raw amino-acid sequence, 456 residues long: Bifunctional protein GlmU (456 aa).

The interval 1–229 (MLNNAMSVVI…LSEVEGVNNR (229 aa)) is pyrophosphorylase. Residues 11-14 (LAAG), K25, Q76, 81-82 (GT), 103-105 (YGD), G140, E154, N169, and N227 each bind UDP-N-acetyl-alpha-D-glucosamine. Residue D105 coordinates Mg(2+). N227 contacts Mg(2+). The interval 230–250 (LQLSRLERVYQSEQAEKLLLA) is linker. The tract at residues 251-456 (GVMLRDPARF…EGWRRPVKKK (206 aa)) is N-acetyltransferase. R333 and K351 together coordinate UDP-N-acetyl-alpha-D-glucosamine. The active-site Proton acceptor is H363. Residues Y366 and N377 each contribute to the UDP-N-acetyl-alpha-D-glucosamine site. Acetyl-CoA contacts are provided by residues A380, 386 to 387 (NY), S405, A423, and R440.

It in the N-terminal section; belongs to the N-acetylglucosamine-1-phosphate uridyltransferase family. The protein in the C-terminal section; belongs to the transferase hexapeptide repeat family. Homotrimer. It depends on Mg(2+) as a cofactor.

It localises to the cytoplasm. The catalysed reaction is alpha-D-glucosamine 1-phosphate + acetyl-CoA = N-acetyl-alpha-D-glucosamine 1-phosphate + CoA + H(+). The enzyme catalyses N-acetyl-alpha-D-glucosamine 1-phosphate + UTP + H(+) = UDP-N-acetyl-alpha-D-glucosamine + diphosphate. It participates in nucleotide-sugar biosynthesis; UDP-N-acetyl-alpha-D-glucosamine biosynthesis; N-acetyl-alpha-D-glucosamine 1-phosphate from alpha-D-glucosamine 6-phosphate (route II): step 2/2. It functions in the pathway nucleotide-sugar biosynthesis; UDP-N-acetyl-alpha-D-glucosamine biosynthesis; UDP-N-acetyl-alpha-D-glucosamine from N-acetyl-alpha-D-glucosamine 1-phosphate: step 1/1. The protein operates within bacterial outer membrane biogenesis; LPS lipid A biosynthesis. Functionally, catalyzes the last two sequential reactions in the de novo biosynthetic pathway for UDP-N-acetylglucosamine (UDP-GlcNAc). The C-terminal domain catalyzes the transfer of acetyl group from acetyl coenzyme A to glucosamine-1-phosphate (GlcN-1-P) to produce N-acetylglucosamine-1-phosphate (GlcNAc-1-P), which is converted into UDP-GlcNAc by the transfer of uridine 5-monophosphate (from uridine 5-triphosphate), a reaction catalyzed by the N-terminal domain. This Escherichia coli O127:H6 (strain E2348/69 / EPEC) protein is Bifunctional protein GlmU.